The sequence spans 641 residues: Putative phagocytic receptor 1a (641 aa).

Residues 1–23 (MKINKKQIVFFILFSIFLNHVNG) form the signal peptide. At 24 to 279 (IFYLPGMIPH…ESNDNSVHWF (256 aa)) the chain is on the extracellular side. The chain crosses the membrane as a helical span at residues 280 to 300 (SILNSLMIVFILTVMVAMIII). Residues 301–349 (RTLKKDIRRYTSIDTSEDRDSQEETGWKMIHGDVFRPPSHPMLLSVCIG) lie on the Cytoplasmic side of the membrane. The helical transmembrane segment at 350–370 (SGVQIFSMTLITMIFAVLGFL) threads the bilayer. The Extracellular portion of the chain corresponds to 371 to 374 (SPAN). Residues 375–395 (IGGLATALIVLFVLSAMFAGY) form a helical membrane-spanning segment. Residues 396–413 (FSTRVFTIFKGRNWKKNT) are Cytoplasmic-facing. A helical transmembrane segment spans residues 414–434 (IYTALSMPGIIFGIFFFVNMF). Residues 435-445 (LRGAKSSAAVP) lie on the Extracellular side of the membrane. Residues 446-466 (FGTFASIIAMWFGISVPLVFL) traverse the membrane as a helical segment. The Cytoplasmic portion of the chain corresponds to 467 to 502 (GSYFASKKPVPEDPVRTNQIPRQVPDQIWYMNPYLS). The chain crosses the membrane as a helical span at residues 503–523 (ILMGGILPFGAVFIELHFILT). Residues 524-532 (SLWDNQFYY) are Extracellular-facing. A helical membrane pass occupies residues 533 to 553 (IFGFLFIVLMILIVTSAEISI). Residues 554–578 (VMCYFQLCAEDHHWWWRSFLTAGSS) are Cytoplasmic-facing. Residues 579-599 (SLYMFIYSVSFFRYLGITKFI) form a helical membrane-spanning segment. Residues 600-608 (SSLLDFSYS) are Extracellular-facing. Residues 609–629 (FIMSLAFAALTGTIGFYSCYF) form a helical membrane-spanning segment. The Cytoplasmic portion of the chain corresponds to 630 to 641 (LVRKIYSSIHIN).

It belongs to the nonaspanin (TM9SF) (TC 9.A.2) family.

It is found in the membrane. Its function is as follows. Involved in adhesion, phagocytosis of hydrophilic particles and intracellular killing of bacteria. Associates with proteins harboring glycine-rich transmembrane domains and ensures their efficient localization to the cell surface. This chain is Putative phagocytic receptor 1a (phg1a), found in Dictyostelium discoideum (Social amoeba).